Here is a 51-residue protein sequence, read N- to C-terminus: Lantibiotic flavucin (51 aa).

A propeptide spanning residues 1 to 20 is cleaved from the precursor; that stretch reads MSDFTLDFAEGDAADTVSPQ. Residues 23–27 constitute a cross-link (lanthionine (Ser-Cys)); the sequence is SKSLC. Cross-links (beta-methyllanthionine (Thr-Cys)) lie at residues 28-31, 33-38, and 42-45; these read TPGC, TGWMMC, and TKGC.

The protein belongs to the type A lantibiotic family. In terms of processing, maturation of lantibiotics involves the enzymatic conversion of Thr, and Ser into dehydrated AA and the formation of thioether bonds with cysteine. This is followed by membrane translocation and cleavage of the modified precursor.

Its activity is regulated as follows. Antimicrobial activity depends on the dehydration degree and integrity of flavucin. Lanthionine-containing peptide antibiotic (lantibiotic) active on certain Gram-positive bacteria. The bactericidal activity of lantibiotics is based on depolarization of energized bacterial cytoplasmic membranes, initiated by the formation of aqueous transmembrane pores. Flavucin has high antimicrobial activity against several pathogenic bacteria such as S.aureus, E.faecalis, E.faecium and L.monocytogenes. Is also active against the Gram-negative P.aeruginosa. This chain is Lantibiotic flavucin, found in Corynebacterium lipophiloflavum (strain ATCC 700352 / DSM 44291 / CCUG 37336 / JCM 10383 / DMMZ 1944).